We begin with the raw amino-acid sequence, 212 residues long: MIKSKFIVIEGLEGAGKTNACICIKNLLKKNSIKNVLLVRQPGSTPIAEDIRRLIKKKFNDDNLIKETELLLMYAARIQLVEKKIKPALKNGIWVISDRHDLSSLAYQGGGLGIPKKIIYQLQSLFLNNFIPDLTIYLDVSPEIGLARALKRNPLDLIESRSLFFFKKTRRCYLEKSKLDKKTIIINANLNIKKVTQNITKKMLNWLNKQVI.

11–18 is a binding site for ATP; that stretch reads GLEGAGKT.

It belongs to the thymidylate kinase family.

It catalyses the reaction dTMP + ATP = dTDP + ADP. Its function is as follows. Phosphorylation of dTMP to form dTDP in both de novo and salvage pathways of dTTP synthesis. The chain is Thymidylate kinase (tmk) from Buchnera aphidicola subsp. Acyrthosiphon pisum (strain APS) (Acyrthosiphon pisum symbiotic bacterium).